The following is a 320-amino-acid chain: Aristolochene synthase (320 aa).

Residues 1 to 14 (MKKPNGTNGASSSL) show a composition bias toward polar residues. The interval 1–20 (MKKPNGTNGASSSLEPPPST) is disordered. Mg(2+)-binding residues include aspartate 90, asparagine 219, serine 223, and glutamate 227. Residues arginine 314 and tyrosine 315 each contribute to the (2E,6E)-farnesyl diphosphate site.

Belongs to the terpene synthase family. Homodimer. Mg(2+) serves as cofactor.

The enzyme catalyses (2E,6E)-farnesyl diphosphate = (+)-aristolochene + diphosphate. It participates in sesquiterpene biosynthesis; aristolochene biosynthesis; aristolochene from farnesyl diphosphate: step 1/1. Functionally, catalyzes the cyclization of trans,trans-farnesyl diphosphate (FPP) to the bicyclic sesquiterpene aristolochene. Produces germacrene A as an enzyme-bound intermediate that is not released by the enzyme, but is further cyclized to produce aristolochene. Aristolochene is the likely parent compound for a number of sesquiterpenoid toxins produced by filamentous fungi. The protein is Aristolochene synthase (Ari1) of Aspergillus terreus.